A 387-amino-acid polypeptide reads, in one-letter code: ERBB-3 BINDING PROTEIN 1 (387 aa).

Necessary for nucleolar localization stretches follow at residues 1 to 49 (MSDD…IVDL) and 297 to 387 (LLQP…PMEG). Residues 47–55 (VDLCEKGDA) are RNA-binding. Residues 337 to 387 (LQPTKTTENEPEIKAWLALPTKTKKKGGGKKKKGKKGDKVEEASQAEPMEG) are disordered. Positions 356-373 (PTKTKKKGGGKKKKGKKG) are interaction with RNA. The segment covering 358–372 (KTKKKGGGKKKKGKK) has biased composition (basic residues). A Nuclear localization signal motif is present at residues 360-369 (KKKGGGKKKK).

Belongs to the peptidase M24 family. In terms of assembly, component of a ribonucleoprotein complex. As to expression, expressed during tuberisation and in roots, nodes, internodes, petioles, leaves, stolons, tubers and sprouts.

It is found in the nucleus. Binds RNA. Associates with 28S, 18S and 5.8S mature rRNAs, several rRNA precursors and probably U3 small nucleolar RNA. May be involved in regulation of intermediate and late steps of rRNA processing. May be involved in ribosome assembly. Required for expression of cell cycle genes such as CYCD3-1, RNR2A and CDKB1-1. Promotes, in a dose- and auxin-dependent manner, organ growth by stimulating both cell proliferation and expansion, via the regulation of RBR1 levels. The protein is ERBB-3 BINDING PROTEIN 1 of Solanum tuberosum (Potato).